A 493-amino-acid polypeptide reads, in one-letter code: MRMLLGIPYVDKSVLSNSVLERGKQDKSKLLLVDKCHYELDVEERKEDFVGGFGFGVVENSHKDVMVLPHHHYYPSYSSPSSSSLCYCSAGVSDPMFSVSSNQAYTSSHSGMFTPAGSGSAAVTVADPFFSLSSSGEMRRSMNEDAGAAFSEAQWHELERQRNIYKYMMASVPVPPELLTPFPKNHQSNTNPDVDTYRSGMFSIYADYKNLPLSMWMTVTVAVATGGSLQLGIASSASNNTADLEPWRCKRTDGKKWRCSRNVIPDQKYCERHTHKSRPRSRKHVESSHQSSHHNDIRTAKNDTSQLVRTYPQFYGQPISQIPVLSTLPSASSPYDHHRGLRWFTKEDDAIGTLNPETQEAVQLKVGSSRELKRGFDYDLNFRQKEPIVDQSFGALQGLLSLNQTPQHNQETRQFVVEGKQDEAMGSSLTLSMAGGGMEETEGTNQHQWVSHEGPSWLYSTTPGGPLAEALCLGVSNNPSSSTTTSSCSRSSS.

In terms of domain architecture, QLQ spans 149–184 (AFSEAQWHELERQRNIYKYMMASVPVPPELLTPFPK). The 45-residue stretch at 243–287 (DLEPWRCKRTDGKKWRCSRNVIPDQKYCERHTHKSRPRSRKHVES) folds into the WRC domain. 2 consecutive short sequence motifs (bipartite nuclear localization signal) follow at residues 248–258 (RCKRTDGKKWR) and 276–283 (KSRPRSRK). Residues 270–302 (CERHTHKSRPRSRKHVESSHQSSHHNDIRTAKN) form a disordered region. Residues 273-283 (HTHKSRPRSRK) are compositionally biased toward basic residues.

The protein belongs to the GRF family. As to expression, predominantly expressed in shoot tips and flowers.

The protein localises to the nucleus. Transcription activator that plays a role in the regulation of cell expansion in leaf and cotyledons tissues. Component of a network formed by miR396, the GRFs and their interacting factors (GIFs) acting in the regulation of meristem function, at least partially through the control of cell proliferation. In Arabidopsis thaliana (Mouse-ear cress), this protein is Growth-regulating factor 8 (GRF8).